Consider the following 346-residue polypeptide: Tetraacyldisaccharide 4'-kinase (346 aa).

Thr54–Thr61 provides a ligand contact to ATP.

Belongs to the LpxK family.

It catalyses the reaction a lipid A disaccharide + ATP = a lipid IVA + ADP + H(+). Its pathway is glycolipid biosynthesis; lipid IV(A) biosynthesis; lipid IV(A) from (3R)-3-hydroxytetradecanoyl-[acyl-carrier-protein] and UDP-N-acetyl-alpha-D-glucosamine: step 6/6. Functionally, transfers the gamma-phosphate of ATP to the 4'-position of a tetraacyldisaccharide 1-phosphate intermediate (termed DS-1-P) to form tetraacyldisaccharide 1,4'-bis-phosphate (lipid IVA). This chain is Tetraacyldisaccharide 4'-kinase, found in Sinorhizobium medicae (strain WSM419) (Ensifer medicae).